Consider the following 245-residue polypeptide: tRNA pseudouridine synthase A (245 aa).

D52 acts as the Nucleophile in catalysis. Y111 is a substrate binding site.

This sequence belongs to the tRNA pseudouridine synthase TruA family. Homodimer.

It catalyses the reaction uridine(38/39/40) in tRNA = pseudouridine(38/39/40) in tRNA. Its function is as follows. Formation of pseudouridine at positions 38, 39 and 40 in the anticodon stem and loop of transfer RNAs. The chain is tRNA pseudouridine synthase A from Zymomonas mobilis subsp. mobilis (strain ATCC 31821 / ZM4 / CP4).